A 309-amino-acid polypeptide reads, in one-letter code: MILTVTMNPSIDISYPLDELKIDTVNRVVDVTKTAGGKGLNVTRVLSEFGDSVLATGLVGGKLGEFLVEHIDNQVKKDFFSIQGETRNCIAILHGDNQTEVLEKGPEVLEQEGQDFLEHFKKLLESVEVVAISGSLPAGLPVDYCASLVELANQAGKPVVLDCSGAALQAVLESPHKPTVIKPNNEELSQLLGREVSEDLDELKEVLQEPLFAGIEWIIVSLGANGTFTKHGDTFYKVDIPRIQAVNPVGSGDSTVAGISSGLLHKESDAELLIKANVLGMLNAQEKMTGHVNMANYQALYDQLIVKEV.

Belongs to the carbohydrate kinase PfkB family. LacC subfamily.

It carries out the reaction D-tagatofuranose 6-phosphate + ATP = D-tagatofuranose 1,6-bisphosphate + ADP + H(+). It participates in carbohydrate metabolism; D-tagatose 6-phosphate degradation; D-glyceraldehyde 3-phosphate and glycerone phosphate from D-tagatose 6-phosphate: step 1/2. The sequence is that of Tagatose-6-phosphate kinase from Streptococcus pneumoniae (strain P1031).